The primary structure comprises 307 residues: Mitogen-activated protein kinase kinase 7 (307 aa).

The 259-residue stretch at 45-303 (VEKLHVLGRG…ASQLLGHPFL (259 aa)) folds into the Protein kinase domain. Residues 51-59 (LGRGSSGIV) and lysine 74 each bind ATP. The active-site Proton acceptor is aspartate 165. 2 positions are modified to phosphoserine: serine 193 and serine 199. Threonine 203 is modified (phosphothreonine).

Belongs to the protein kinase superfamily. STE Ser/Thr protein kinase family. MAP kinase kinase subfamily. Interacts with MPK15. Phosphorylation at Ser-193 and Ser-199 by MAP kinase kinase kinases positively regulates kinase activity. In terms of tissue distribution, expressed in all tissues, with a relatively higher level in leaves and lower level in roots and flowers.

It carries out the reaction L-seryl-[protein] + ATP = O-phospho-L-seryl-[protein] + ADP + H(+). The enzyme catalyses L-threonyl-[protein] + ATP = O-phospho-L-threonyl-[protein] + ADP + H(+). It catalyses the reaction L-tyrosyl-[protein] + ATP = O-phospho-L-tyrosyl-[protein] + ADP + H(+). In terms of biological role, may function as a negative regulator of polar auxin transport. Positively regulates plant basal and systemic acquired resistance (SAR). Activates MPK3 and MPK6 in vitro. This is Mitogen-activated protein kinase kinase 7 (MKK7) from Arabidopsis thaliana (Mouse-ear cress).